We begin with the raw amino-acid sequence, 121 residues long: Ribonuclease P protein component (121 aa).

The protein belongs to the RnpA family. As to quaternary structure, consists of a catalytic RNA component (M1 or rnpB) and a protein subunit.

It carries out the reaction Endonucleolytic cleavage of RNA, removing 5'-extranucleotides from tRNA precursor.. In terms of biological role, RNaseP catalyzes the removal of the 5'-leader sequence from pre-tRNA to produce the mature 5'-terminus. It can also cleave other RNA substrates such as 4.5S RNA. The protein component plays an auxiliary but essential role in vivo by binding to the 5'-leader sequence and broadening the substrate specificity of the ribozyme. The sequence is that of Ribonuclease P protein component from Geobacillus kaustophilus (strain HTA426).